A 428-amino-acid chain; its full sequence is uncharacterized protein (428 aa).

A disordered region spans residues 72 to 91 (SQGSPVAPSPNHRSTMYSSS). At serine 127 the chain carries Phosphoserine.

This is an uncharacterized protein from Saccharomyces cerevisiae (strain ATCC 204508 / S288c) (Baker's yeast).